The chain runs to 321 residues: Ribose-phosphate pyrophosphokinase 1 (321 aa).

Residues D131, H133, D142, and D146 each coordinate Mg(2+).

This sequence belongs to the ribose-phosphate pyrophosphokinase family.

It catalyses the reaction D-ribose 5-phosphate + ATP = 5-phospho-alpha-D-ribose 1-diphosphate + AMP + H(+). This Candida albicans (Yeast) protein is Ribose-phosphate pyrophosphokinase 1 (PRS1).